A 311-amino-acid chain; its full sequence is Taste receptor type 2 member 40 (311 aa).

The Extracellular segment spans residues 1–9 (MSSLFSSFC). The helical transmembrane segment at 10-30 (LVIAIFESVVGLLGNGTIVAV) threads the bilayer. The Cytoplasmic portion of the chain corresponds to 31-55 (SSTSCIRSKILSSYDVIVIFLSLSR). Residues 56 to 76 (FFLQLWMILDFLLIFFCQPSY) form a helical membrane-spanning segment. Over 77–87 (YEENLFVTFKT) the chain is Extracellular. Residues 88–108 (VFIFLNSYSFWFAAWLSVFYC) traverse the membrane as a helical segment. Residues 109-128 (VKVASFTQSFLSWLKQRIAS) are Cytoplasmic-facing. A helical membrane pass occupies residues 129 to 149 (LIPWMLITSSLFSFATSLPFF). The Extracellular segment spans residues 150–178 (WDSYNAHSNFTTPLTMTNSSKRITTRKTN). A helical transmembrane segment spans residues 179-199 (LIFLILLCNVGIALPSIMLVF). At 200–235 (SSILLIRSLWRHTRQMQNNATGFRDPSLEALIGAIK) the chain is on the cytoplasmic side. Residues 236 to 256 (TVFSFLLLYITNFIALILILS) form a helical membrane-spanning segment. At 257 to 266 (DTFVPLSTEE) the chain is on the extracellular side. A helical transmembrane segment spans residues 267–287 (AICVVVVAACPAGQSMVLIWS). Residues 288 to 311 (NPRFRELLSSILHYVNSCVRARCS) lie on the Cytoplasmic side of the membrane.

The protein belongs to the G-protein coupled receptor T2R family. Expressed in the oral cavity, as well as in the gastrointestinal tract, including in the upper palate, tongue, proventriculus, ventriculus, duodenum, jejunum, ileum, cecum and colon.

The protein localises to the cell membrane. Its function is as follows. Bitter taste receptor. Binds quinine, dextromethorphan, diphenhydramine, diphenidol, chlorpheniramine, diphenidol, chloramphenicol, chloroquine and coumarin, this latter being a weak agonist, as well as epiquinidine, ethylhydrocupreine and quinidine. This is Taste receptor type 2 member 40 (TAS2R40) from Gallus gallus (Chicken).